Reading from the N-terminus, the 101-residue chain is Small ribosomal subunit protein uS14 (101 aa).

Basic and acidic residues predominate over residues Met1–Asp10. The interval Met1–Tyr20 is disordered.

Belongs to the universal ribosomal protein uS14 family. Part of the 30S ribosomal subunit. Contacts proteins S3 and S10.

Functionally, binds 16S rRNA, required for the assembly of 30S particles and may also be responsible for determining the conformation of the 16S rRNA at the A site. The sequence is that of Small ribosomal subunit protein uS14 from Halorhodospira halophila (strain DSM 244 / SL1) (Ectothiorhodospira halophila (strain DSM 244 / SL1)).